A 427-amino-acid chain; its full sequence is O-methyltransferase PaMT (427 aa).

2 residues coordinate S-adenosyl-L-methionine: Trp-230 and Asp-281. Catalysis depends on His-326, which acts as the Proton acceptor.

This sequence belongs to the class I-like SAM-binding methyltransferase superfamily. Cation-independent O-methyltransferase family. COMT subfamily. S-adenosyl-L-methionine serves as cofactor.

The protein operates within mycotoxin biosynthesis. In terms of biological role, O-methyltransferase; part of the 2 gene clusters that mediate the biosynthesis of fusicoccins, diterpene glucosides that display phytohormone-like activity and function as potent activators of plasma membrane H(+)-ATPases in plants by modifying 14-3-3 proteins and cause the plant disease constriction canker. The first step in the pathway is performed by the fusicoccadiene synthase PaFS that possesses both prenyl transferase and terpene cyclase activity, converting isopentenyl diphosphate and dimethylallyl diphosphate into geranylgeranyl diphosphate (GGDP) and successively converting GGDP into fusicocca-2,10(14)-diene, a precursor for fusicoccin H. The second step is the oxidation at the C-8 position by the cytochrome P450 monooxygenase PaP450-2 to yield fusicocca-2,10(14)-diene-8-beta-ol. The cytochrome P450 monooxygenase PaP450-1 then catalyzes the hydroxylation at the C-16 position to produce fusicocca-2,10(14)-diene-8-beta,16-diol. The dioxygenase fc-dox then catalyzes the 16-oxydation of fusicocca-2,10(14)-diene-8-beta,16-diol to yield an aldehyde (8-beta-hydroxyfusicocca-1,10(14)-dien-16-al). The short-chain dehydrogenase/reductase fc-sdr catalyzes the reduction of the aldehyde to yield fusicocca-1,10(14)-diene-8-beta,16-diol. The next step is the hydroxylation at C-9 performed by the cytochrome P450 monooxygenase PaP450-3 that leads to fusicoccin H aglycon which is glycosylated to fusicoccin H by the O-glycosyltransferase PaGT. Hydroxylation at C-12 by the cytochrome P450 monooxygenase PaP450-4 leads then to the production of fusicoccin Q and is followed by methylation by the O-methyltransferase PaMT to yield fusicoccin P. Fusicoccin P is further converted to fusicoccin J via prenylation by the O-glucose prenyltransferase PaPT. Cytochrome P450 monooxygenase PaP450-5 then performs hydroxylation at C-19 to yield dideacetyl-fusicoccin A which is acetylated to 3'-O-deacetyl-fusicoccin A by the O-acetyltransferase PaAT-2. Finally, a another acetylation by the O-acetyltransferase PaAT-1 yields fusicoccin A. The polypeptide is O-methyltransferase PaMT (Phomopsis amygdali (Fusicoccum amygdali)).